Reading from the N-terminus, the 1209-residue chain is Nitric oxide synthase (1209 aa).

A (6R)-L-erythro-5,6,7,8-tetrahydrobiopterin-binding site is contributed by Ser103. Cys181 provides a ligand contact to heme b. L-arginine contacts are provided by Gln244, Trp353, Tyr354, Glu358, and Asn363. (6R)-L-erythro-5,6,7,8-tetrahydrobiopterin contacts are provided by Trp444 and Phe457. Tyr472 is a heme b binding site. A calmodulin-binding region spans residues 491 to 511 (VHRKFHFKQIARAVKFTSKLF). The region spanning 521-723 (ATILYATETG…QFRAWSSKIF (203 aa)) is the Flavodoxin-like domain. Residue 527-531 (TETGK) participates in FMN binding. Residues 603 to 622 (RGDGTSDLGSGTFKTPTPKS) form a disordered region. 669–700 (VFGLGSSAYPKFCHFGKTVDKILGDLGGERIL) lines the FMN pocket. The FAD-binding FR-type domain maps to 776–1021 (KQLITCKVKE…IRRAPSFHMP (246 aa)). FAD is bound by residues 811–822 (YDPGDHVGVLAC) and 954–964 (LQPRFYSISSS). NADP(+) contacts are provided by residues 1028–1147 (LILV…QQKL) and 1128–1143 (NGHF…AEEV).

The protein belongs to the NOS family. The cofactor is heme b. It depends on FAD as a cofactor. FMN serves as cofactor. As to expression, constitutively expressed at a low level in the larval fat body, hemocyte, Malpighian tubule, midgut, silk gland and adult antenna.

The enzyme catalyses 2 L-arginine + 3 NADPH + 4 O2 + H(+) = 2 L-citrulline + 2 nitric oxide + 3 NADP(+) + 4 H2O. Its activity is regulated as follows. Expression is dependent on and stimulated by NADPH, calcium, BH4 and calmodulin. The activity is not dependent on FAD and is not stimulated by its presence. In terms of biological role, produces nitric oxide (NO) which is a messenger molecule with diverse functions throughout the body. Involved in the induction of immune gene expression. In Bombyx mori (Silk moth), this protein is Nitric oxide synthase.